A 117-amino-acid chain; its full sequence is Protein TCL1B2 (117 aa).

Belongs to the TCL1 family.

The chain is Protein TCL1B2 (Tcl1b2) from Mus musculus (Mouse).